The primary structure comprises 384 residues: Fructose-1,6-bisphosphate aldolase/phosphatase (384 aa).

The Proton acceptor; for FBP phosphatase activity role is filled by D11. 4 residues coordinate Mg(2+): D11, H18, D52, and D53. Position 18 (H18) interacts with beta-D-fructose 1,6-bisphosphate. H18 contributes to the dihydroxyacetone phosphate binding site. Y90 contacts beta-D-fructose 1,6-bisphosphate. Residue Q94 participates in Mg(2+) binding. 103-104 (GN) lines the beta-D-fructose 1,6-bisphosphate pocket. Mg(2+) is bound at residue D131. K132 lines the beta-D-fructose 1,6-bisphosphate pocket. Residue K132 participates in dihydroxyacetone phosphate binding. Y228 (proton donor/acceptor; for FBP aldolase activity) is an active-site residue. Residues K231, D232, and D233 each contribute to the Mg(2+) site. K231 acts as the Schiff-base intermediate with DHAP; for FBP aldolase activity in catalysis. Beta-D-fructose 1,6-bisphosphate contacts are provided by residues 241–242 (QH), R265, D286, and Y347. Dihydroxyacetone phosphate-binding residues include R265 and D286.

Belongs to the FBP aldolase/phosphatase family. In terms of assembly, homooctamer; dimer of tetramers. It depends on Mg(2+) as a cofactor.

The catalysed reaction is beta-D-fructose 1,6-bisphosphate + H2O = beta-D-fructose 6-phosphate + phosphate. It carries out the reaction beta-D-fructose 1,6-bisphosphate = D-glyceraldehyde 3-phosphate + dihydroxyacetone phosphate. It participates in carbohydrate biosynthesis; gluconeogenesis. Catalyzes two subsequent steps in gluconeogenesis: the aldol condensation of dihydroxyacetone phosphate (DHAP) and glyceraldehyde-3-phosphate (GA3P) to fructose-1,6-bisphosphate (FBP), and the dephosphorylation of FBP to fructose-6-phosphate (F6P). The chain is Fructose-1,6-bisphosphate aldolase/phosphatase from Sulfurisphaera tokodaii (strain DSM 16993 / JCM 10545 / NBRC 100140 / 7) (Sulfolobus tokodaii).